The sequence spans 301 residues: MSAVITLTPLNESFQTKKLVISPSTIYKIGRHTNKSTSPSPSNLFFNSKVLSRQHAELWLDKDTLSVYIRDVKSSNGTFVNETRLSPENKPSAPCKLNSGDIVDFGVDIYNEDEIVHQKVSAQVRIVVRGATFATTPARSLDSEVMLDSIMRQMVFQYQRCVELNENLESLENGVEEVSKSLSWLETGKTRDNRNNHHYSRKSSPHISSLAVPSTKHLDGERDRNLKRSTSPLSSSPFVTEAALNEAELAKTNLEAWKARAFTAEARLSSKNKSWQEKKYLVLSPFFIAVAGIIVYMGYWR.

In terms of domain architecture, FHA spans 27-85 (YKIGRHTNKSTSPSPSNLFFNSKVLSRQHAELWLDKDTLSVYIRDVKSSNGTFVNETRL). The tract at residues 187–236 (TGKTRDNRNNHHYSRKSSPHISSLAVPSTKHLDGERDRNLKRSTSPLSSS) is disordered. Phosphoserine is present on Ser204. The segment covering 216–226 (KHLDGERDRNL) has biased composition (basic and acidic residues). Ser231 bears the Phosphoserine mark.

In terms of assembly, interacts with sad1.

It is found in the nucleus. This is an uncharacterized protein from Schizosaccharomyces pombe (strain 972 / ATCC 24843) (Fission yeast).